We begin with the raw amino-acid sequence, 529 residues long: HTH-type transcriptional activator Btr (529 aa).

A DNA-binding region (H-T-H motif) is located at residues 182 to 201 (LAQLSQMAGISAKHYSESFK). Residues 268 to 528 (KIAAYGRGTM…QTVSLLSGDC (261 aa)) form the Fe/B12 periplasmic-binding domain.

As to quaternary structure, binds with high affinity to both apo-bacillibactin and iron-bacillibactin.

The protein resides in the cytoplasm. In terms of biological role, in iron-limited conditions, activates expression of the feuABCybbA operon, which encodes the bacillibactin uptake system. Acts by binding directly to a conserved direct repeat element upstream of the feuA promoter. Activity is increased in the presence of bacillibactin. In Bacillus subtilis (strain 168), this protein is HTH-type transcriptional activator Btr (btr).